The primary structure comprises 589 residues: Pentalenolactone D synthase (589 aa).

FAD-binding positions include 60–61, 82–83, 90–91, 102–103, Tyr108, Val152, and Met491; these read IG, DE, TW, and DV.

Belongs to the FAD-binding monooxygenase family. The cofactor is FAD.

It carries out the reaction 1-deoxy-11-oxopentalenate + NADPH + O2 + H(+) = pentalenolactone D + NADP(+) + H2O. The protein operates within antibiotic biosynthesis; pentalenolactone biosynthesis. Catalyzes the flavin-dependent Baeyer-Villiger oxidation of 1-deoxy-11-oxopentalenic acid to pentalenolactone D in the biosynthesis of pentalenolactone antibiotic. The protein is Pentalenolactone D synthase (pntE) of Streptomyces arenae.